We begin with the raw amino-acid sequence, 84 residues long: M-zodatoxin-Lt2b (84 aa).

The signal sequence occupies residues 1–22 (MKYFVIALALAVALVCIAESTA). Positions 23–58 (YEVNEELENELDDLDDAAWLAVAEELQGLEDFEESR) are excised as a propeptide. The Processing quadruplet motif signature appears at 55-58 (EESR).

Cleavage of the propeptide depends on the processing quadruplet motif (XXXR, with at least one of X being E). Expressed by the venom gland.

The protein localises to the secreted. Functionally, has antimicrobial activity against both Gram-positive and Gram-negative bacteria, and yeasts. Also has a strong hemolytic activity against rabbit erythrocytes. Causes paralysis, but is not lethal when injected into insect (M.domestica) larvae. The sequence is that of M-zodatoxin-Lt2b from Lachesana tarabaevi (Spider).